A 757-amino-acid chain; its full sequence is MDVNPTLLFLKVPAQNAISTTFPYTGDPPYSHGTGTGYTMDTVNRTHQYSERGKWTTNTETGAPQLNPIDGPLPEDNEPTGYAQTDCVLEAMAFLEKSHPGIFENSCLETMEVVQQTRVDKLTQGRQTFDWTLNRNQPAATALANTIEVFRLNGLTASESGRLIDFLKDVMESMDKEEMEIVTHFQRKRRVRDNMTKKMVTQRTIGKKKQKLNKRSYIIRALTLNTMTKDAERGKLKRRAIATPGMQIRGFVYFVETLARSICEKLEQSGLPVGGNEKKAKLANVVRKMMTNSQDTELSFTITGDNTKWNENQNPRMFLAMITYITRNQPEWFRNVLSIAPIMFSNKMARLGKGYMFESKNMKLRTQIPAEMLSGIDLRYFNDSTRKKIEKIRPLLIDGAASLSPGMMMGMFNMLSTVLGVSILNLGQKEYTKTAYWWDGLQSSDDFALIVNALNHEGIQAGVDRFYRTCKLLGINMSKKKSYINRTGTFEFTSFFYRYGFVANFSMELPSFGVSGINESADMSIGVTVIKNNMINNDLGPATAQMALQLFIKDYRYTYRCHRGDTQIQTRRSFEIKKLWDQTHSKAGLLVSDGGPNLYNIRNLHIPEVCLKWELMDKDYQGRLCNPLNPFVSHKEIESVNNAVVMPSHGPAKTMEYDAVATTHSWVPKRNRSILNTSQRGILEDEQMYQKCCNLFEKFFPSSSYRRPVGISSMVEAMVSRARIDARIDFESGRIKKEDFAEIMKICSTIEDLRRQK.

The disordered stretch occupies residues Arg52 to Glu78. Residues Trp55–Pro64 show a composition bias toward polar residues. 2 consecutive short sequence motifs (nuclear localization signal) follow at residues Arg187–Met195 and Arg203–Ser216. The interval Arg249–Glu256 is promoter-binding site. Residues Val286–Tyr483 form the RdRp catalytic domain.

The protein belongs to the influenza viruses polymerase PB1 family. In terms of assembly, influenza RNA polymerase is composed of three subunits: PB1, PB2 and PA. Interacts (via N-terminus) with PA (via C-terminus). Interacts (via C-terminus) with PB2 (via N-terminus); this interaction is essential for transcription initiation. Interacts (via C-terminus) with human PKP2 (via N-terminus); the interaction competitively inhibits the interaction between the RNA polymerase subunits PB1 and PB2. Post-translationally, phosphorylated by host PRKCA.

Its subcellular location is the host nucleus. The protein localises to the host cytoplasm. It catalyses the reaction RNA(n) + a ribonucleoside 5'-triphosphate = RNA(n+1) + diphosphate. Functionally, RNA-dependent RNA polymerase which is responsible for replication and transcription of virus RNA segments. The transcription of viral mRNAs occurs by a unique mechanism called cap-snatching. 5' methylated caps of cellular mRNAs are cleaved after 10-13 nucleotides by PA. In turn, these short capped RNAs are used as primers by PB1 for transcription of viral mRNAs. During virus replication, PB1 initiates RNA synthesis and copy vRNA into complementary RNA (cRNA) which in turn serves as a template for the production of more vRNAs. The sequence is that of RNA-directed RNA polymerase catalytic subunit from Influenza A virus (strain A/Swine/Tennessee/26/1977 H1N1).